The chain runs to 348 residues: MO25-like protein At2g03410 (348 aa).

This sequence belongs to the Mo25 family.

The chain is MO25-like protein At2g03410 from Arabidopsis thaliana (Mouse-ear cress).